The primary structure comprises 272 residues: Bis(5'-nucleosyl)-tetraphosphatase, symmetrical (272 aa).

It belongs to the Ap4A hydrolase family.

The catalysed reaction is P(1),P(4)-bis(5'-adenosyl) tetraphosphate + H2O = 2 ADP + 2 H(+). Its function is as follows. Hydrolyzes diadenosine 5',5'''-P1,P4-tetraphosphate to yield ADP. The polypeptide is Bis(5'-nucleosyl)-tetraphosphatase, symmetrical (Glaesserella parasuis serovar 5 (strain SH0165) (Haemophilus parasuis)).